We begin with the raw amino-acid sequence, 472 residues long: FAD-linked oxidoreductase azaL (472 aa).

A signal peptide spans 1–18 (MFRTILLCSLGLTTLSSA). 11 N-linked (GlcNAc...) asparagine glycosylation sites follow: asparagine 22, asparagine 44, asparagine 102, asparagine 123, asparagine 227, asparagine 246, asparagine 273, asparagine 305, asparagine 318, asparagine 390, and asparagine 415. Residues 54–228 (TTYDAPTYIG…TSATYKIYNA (175 aa)) enclose the FAD-binding PCMH-type domain.

This sequence belongs to the oxygen-dependent FAD-linked oxidoreductase family.

It participates in secondary metabolite biosynthesis. Functionally, FAD-linked oxidoreductase; part of the gene cluster that mediates the biosynthesis of azaphilones, a class of fungal metabolites characterized by a highly oxygenated pyrano-quinone bicyclic core and exhibiting a broad range of bioactivities. In the first step, the non-reducing polyketide synthase azaA forms the hexaketide precursor from successive condensations of five malonyl-CoA units, presumably with a simple acetyl-CoA starter unit. The reactive polyketide chain then undergoes a PT-mediated C2-C7 cyclization to afford the aromatic ring and is eventually released as an aldehyde through the R-domain. The putative ketoreductase azaE is proposed to catalyze the reduction of the terminal ketone resulting in the early culture product FK17-P2a. The monooxygenase azaH was demonstrated to be the only enzyme required to convert FK17-P2a to azanigerone E. AzaH first hydroxylates the benzaldehyde intermediate FK17-P2a at C4, which triggers the formation of the pyran-ring to afford azanigerone E. In parallel, the 2,4-dimethylhexanoyl chain is synthesized by the HR-PKS azaB and is proposed to be transferred to the C4-hydroxyl of azanigerone E by the acyltransferase azaD directly from the ACP domain of azaB. Alternatively, the 2,4-dimethyl-hexanoyl chain may be offloaded from the HR-PKS as a carboxylic acid and converted to an acyl-CoA by azaF. The resulting acyl-CoA molecule could then be taken up as a substrate by AzaD to form azanigerone B. To yield the carboxylic acid substituent in azanigerone A, the hydroxypropyl side chain of azanigerone B would need to undergo a C-C oxidative cleavage catalyzed by cytochrome P450 AzaI. AzaI is proposed to act on a vicinal diol that leads to a C-C bond scission either through an alkoxyradical intermediate or a peroxy complex. In the biosynthesis of azanigerone A, azanigerone B first undergoes hydroxylation at C10, possibly catalyzed by one of the two FAD-dependent monooxygenases encoded in the cluster, azaG or azaL, resulting in the vicinal diol azanigerone C. Oxidative cleavage of azanigerone C by azaI would yield the corresponding aldehyde derivative of azanigerone A. Finally, the dehydrogenase azaJ is proposed to convert the aldehyde functional group into the carboxylic acid, completing the conversion from azanigerone B to azanigerone A. Alternatively, the oxidation of aldehyde to carboxylic acid may be catalyzed by the same P450 enzyme azaI via consecutive oxidation or by endogenous alcohol dehydrogenase. In Aspergillus niger (strain ATCC 1015 / CBS 113.46 / FGSC A1144 / LSHB Ac4 / NCTC 3858a / NRRL 328 / USDA 3528.7), this protein is FAD-linked oxidoreductase azaL.